Here is a 428-residue protein sequence, read N- to C-terminus: Cysteine synthase 2 (428 aa).

Residues 7 to 27 (IYIGSAFVAGVVLTIAFKDLF) traverse the membrane as a helical segment. Residue Lys106 is modified to N6-(pyridoxal phosphate)lysine. Residues 260 to 264 (GTGGT) and Ser367 each bind pyridoxal 5'-phosphate.

Belongs to the cysteine synthase/cystathionine beta-synthase family. Pyridoxal 5'-phosphate serves as cofactor.

It localises to the mitochondrion outer membrane. The catalysed reaction is O-acetyl-L-serine + hydrogen sulfide = L-cysteine + acetate. Its function is as follows. Putative cysteine synthase that catalyzes the conversion of O-acetyl-L-serine (OAS) into cysteine, the last step in the cysteine biosynthesis pathway. However, in contrast to cysteine synthase cysB, this CS-like protein seems not to function in cysteine biosynthesis. The chain is Cysteine synthase 2 from Emericella nidulans (strain FGSC A4 / ATCC 38163 / CBS 112.46 / NRRL 194 / M139) (Aspergillus nidulans).